The following is a 109-amino-acid chain: Mitochondrial import receptor subunit TOM22 homolog (109 aa).

The Cytoplasmic segment spans residues 1–60 (MALVRDDFDDIPDSEIHETIVERIEGLGEMFPDALRSAVHSTVDWSIWGVKGVFSLTKST). A helical membrane pass occupies residues 61 to 77 (IWVVSTTSLIAFLPYII). Residues 78 to 109 (EKERSDLEKTQVAQQRQMLLGPSAAIQQAKTA) are Mitochondrial intermembrane-facing.

It belongs to the Tom22 family. Forms part of the preprotein translocase complex of the outer mitochondrial membrane (TOM complex).

Its subcellular location is the mitochondrion outer membrane. Its function is as follows. Central receptor component of the translocase of the outer membrane of mitochondria (TOM complex) responsible for the recognition and translocation of cytosolically synthesized mitochondrial preproteins. Together with the peripheral receptor tomm-20 functions as the transit peptide receptor and facilitates the movement of preproteins into the translocation pore. This Caenorhabditis elegans protein is Mitochondrial import receptor subunit TOM22 homolog.